The chain runs to 189 residues: MyoD family inhibitor domain-containing protein 2 (189 aa).

The region spanning 28–188 (KEDTQLTNAK…LAMEISEICY (161 aa)) is the MDFI domain.

Belongs to the MDFI family.

The chain is MyoD family inhibitor domain-containing protein 2 from Homo sapiens (Human).